The sequence spans 269 residues: 4-hydroxy-tetrahydrodipicolinate reductase (269 aa).

Residues G8–M13 and E34 contribute to the NAD(+) site. R35 is an NADP(+) binding site. NAD(+) is bound by residues G98–T100 and A122–Y125. Residue H155 is the Proton donor/acceptor of the active site. Residue H156 coordinates (S)-2,3,4,5-tetrahydrodipicolinate. Catalysis depends on K159, which acts as the Proton donor. G165 to T166 is a binding site for (S)-2,3,4,5-tetrahydrodipicolinate.

It belongs to the DapB family.

It is found in the cytoplasm. It carries out the reaction (S)-2,3,4,5-tetrahydrodipicolinate + NAD(+) + H2O = (2S,4S)-4-hydroxy-2,3,4,5-tetrahydrodipicolinate + NADH + H(+). The enzyme catalyses (S)-2,3,4,5-tetrahydrodipicolinate + NADP(+) + H2O = (2S,4S)-4-hydroxy-2,3,4,5-tetrahydrodipicolinate + NADPH + H(+). The protein operates within amino-acid biosynthesis; L-lysine biosynthesis via DAP pathway; (S)-tetrahydrodipicolinate from L-aspartate: step 4/4. Its function is as follows. Catalyzes the conversion of 4-hydroxy-tetrahydrodipicolinate (HTPA) to tetrahydrodipicolinate. This chain is 4-hydroxy-tetrahydrodipicolinate reductase, found in Vibrio cholerae serotype O1 (strain ATCC 39315 / El Tor Inaba N16961).